The primary structure comprises 483 residues: Membrane-bound lytic murein transglycosylase F (483 aa).

Residues 1 to 18 form the signal peptide; it reads MKGLIARFIAGFALLLWA. The tract at residues 19–267 is non-LT domain; the sequence is WDMVFPWQQL…RIEEKYFNHL (249 aa). Residues 269-483 form an LT domain region; it reads HFDYVDIQSY…SKESDSTLKE (215 aa). E312 is an active-site residue. Residues 459 to 483 form a disordered region; it reads QIQNNEEQSSVPQEISKESDSTLKE. The segment covering 473-483 has biased composition (basic and acidic residues); it reads ISKESDSTLKE.

This sequence in the N-terminal section; belongs to the bacterial solute-binding protein 3 family. The protein in the C-terminal section; belongs to the transglycosylase Slt family.

Its subcellular location is the cell outer membrane. The catalysed reaction is Exolytic cleavage of the (1-&gt;4)-beta-glycosidic linkage between N-acetylmuramic acid (MurNAc) and N-acetylglucosamine (GlcNAc) residues in peptidoglycan, from either the reducing or the non-reducing ends of the peptidoglycan chains, with concomitant formation of a 1,6-anhydrobond in the MurNAc residue.. Functionally, murein-degrading enzyme that degrades murein glycan strands and insoluble, high-molecular weight murein sacculi, with the concomitant formation of a 1,6-anhydromuramoyl product. Lytic transglycosylases (LTs) play an integral role in the metabolism of the peptidoglycan (PG) sacculus. Their lytic action creates space within the PG sacculus to allow for its expansion as well as for the insertion of various structures such as secretion systems and flagella. The polypeptide is Membrane-bound lytic murein transglycosylase F (Actinobacillus pleuropneumoniae serotype 7 (strain AP76)).